The sequence spans 498 residues: ATP synthase subunit beta, chloroplastic (498 aa).

Residue G172–T179 participates in ATP binding.

Belongs to the ATPase alpha/beta chains family. F-type ATPases have 2 components, CF(1) - the catalytic core - and CF(0) - the membrane proton channel. CF(1) has five subunits: alpha(3), beta(3), gamma(1), delta(1), epsilon(1). CF(0) has four main subunits: a(1), b(1), b'(1) and c(9-12).

The protein localises to the plastid. Its subcellular location is the chloroplast thylakoid membrane. It carries out the reaction ATP + H2O + 4 H(+)(in) = ADP + phosphate + 5 H(+)(out). Its function is as follows. Produces ATP from ADP in the presence of a proton gradient across the membrane. The catalytic sites are hosted primarily by the beta subunits. This is ATP synthase subunit beta, chloroplastic from Zea mays (Maize).